The primary structure comprises 481 residues: Delta(14)-sterol reductase ERG24B (481 aa).

Helical transmembrane passes span 11 to 31 (FGGP…MQVL), 80 to 100 (LFAY…QIVL), 125 to 145 (LTGC…WTWI), 149 to 169 (YIQL…WTYL), 244 to 264 (TYGF…YYVL), 279 to 299 (ITSD…VPFL), 313 to 333 (HLGP…LYIF), and 427 to 447 (AAPW…FLLI).

It belongs to the ERG4/ERG24 family.

The protein resides in the endoplasmic reticulum membrane. The enzyme catalyses 4,4-dimethyl-5alpha-cholesta-8,24-dien-3beta-ol + NADP(+) = 4,4-dimethyl-5alpha-cholesta-8,14,24-trien-3beta-ol + NADPH + H(+). It functions in the pathway steroid metabolism; ergosterol biosynthesis. Delta(14)-sterol reductase; part of the third module of ergosterol biosynthesis pathway that includes the late steps of the pathway. Catalyzes the reduction of the C14=C15 double bond within 4,4,24-trimethyl ergosta-8,14,24(28)-trienolto produce 4,4-dimethylfecosterol. The third module or late pathway involves the ergosterol synthesis itself through consecutive reactions that mainly occur in the endoplasmic reticulum (ER) membrane. Firstly, the squalene synthase ERG9 catalyzes the condensation of 2 farnesyl pyrophosphate moieties to form squalene, which is the precursor of all steroids. Squalene synthase is crucial for balancing the incorporation of farnesyl diphosphate (FPP) into sterol and nonsterol isoprene synthesis. Secondly, squalene is converted into lanosterol by the consecutive action of the squalene epoxidase ERG1 and the lanosterol synthase ERG7. Then, the delta(24)-sterol C-methyltransferase ERG6 methylates lanosterol at C-24 to produce eburicol. Eburicol is the substrate of the sterol 14-alpha demethylase encoded by CYP51A, CYP51B and CYP51C, to yield 4,4,24-trimethyl ergosta-8,14,24(28)-trienol. CYP51B encodes the enzyme primarily responsible for sterol 14-alpha-demethylation, and plays an essential role in ascospore formation. CYP51A encodes an additional sterol 14-alpha-demethylase, induced on ergosterol depletion and responsible for the intrinsic variation in azole sensitivity. The third CYP51 isoform, CYP51C, does not encode a sterol 14-alpha-demethylase, but is required for full virulence on host wheat ears. The C-14 reductase ERG24 then reduces the C14=C15 double bond which leads to 4,4-dimethylfecosterol. A sequence of further demethylations at C-4, involving the C-4 demethylation complex containing the C-4 methylsterol oxidases ERG25, the sterol-4-alpha-carboxylate 3-dehydrogenase ERG26 and the 3-keto-steroid reductase ERG27, leads to the production of fecosterol via 4-methylfecosterol. ERG28 has a role as a scaffold to help anchor ERG25, ERG26 and ERG27 to the endoplasmic reticulum. The C-8 sterol isomerase ERG2 then catalyzes the reaction which results in unsaturation at C-7 in the B ring of sterols and thus converts fecosterol to episterol. The sterol-C5-desaturases ERG3A and ERG3BB then catalyze the introduction of a C-5 double bond in the B ring to produce 5-dehydroepisterol. The C-22 sterol desaturases ERG5A and ERG5B further convert 5-dehydroepisterol into ergosta-5,7,22,24(28)-tetraen-3beta-ol by forming the C-22(23) double bond in the sterol side chain. Finally, ergosta-5,7,22,24(28)-tetraen-3beta-ol is substrate of the C-24(28) sterol reductase ERG4 to produce ergosterol. This is Delta(14)-sterol reductase ERG24B from Gibberella zeae (strain ATCC MYA-4620 / CBS 123657 / FGSC 9075 / NRRL 31084 / PH-1) (Wheat head blight fungus).